The following is a 1517-amino-acid chain: uncharacterized protein (1517 aa).

The span at 1-13 (MNQFPNQPGNFGQ) shows a compositional bias: polar residues. The tract at residues 1 to 26 (MNQFPNQPGNFGQNYYKPVQGSIPAN) is disordered. N-linked (GlcNAc...) asparagine glycans are attached at residues asparagine 35, asparagine 40, and asparagine 76. Helical transmembrane passes span 231–251 (AIDFVVSLFGCFIAGVVAVPI), 397–417 (AIGLILGVLHTVFSGYTTVWC), 510–530 (FVPLLCLPEHGGMVISMKDWI), 612–632 (PNIVGEIWVDSPSLSGGFFAL), and 720–740 (VFDCSAFDIFVNSEHLPVVLL). N-linked (GlcNAc...) asparagine glycosylation occurs at asparagine 917. The next 4 membrane-spanning stretches (helical) occupy residues 956-976 (FVYALYACFYLGLIPIPVPPL), 985-1005 (VPAFLFLIKHYYVSAVLVNSE), 1051-1071 (VKLDPICLDPAFPALVWAFWS), and 1114-1134 (GIGFFHTCLMGVFLGTTTYLL). A glycan (N-linked (GlcNAc...) asparagine) is linked at asparagine 1178. A helical transmembrane segment spans residues 1261 to 1281 (PYALPLLDSGMVPVSTQLAIV). Asparagine 1321 carries an N-linked (GlcNAc...) asparagine glycan. Transmembrane regions (helical) follow at residues 1353–1373 (APVVDMQLLYVLGPIGETFEV) and 1408–1428 (VVVVIEALGQDFLAAIVPVVI).

To S.pombe SpAC22F3.04.

The protein resides in the membrane. This is an uncharacterized protein from Schizosaccharomyces pombe (strain 972 / ATCC 24843) (Fission yeast).